The sequence spans 254 residues: Ribonuclease PH (254 aa).

Phosphate contacts are provided by residues R86 and G124–R126.

The protein belongs to the RNase PH family. Homohexameric ring arranged as a trimer of dimers.

The enzyme catalyses tRNA(n+1) + phosphate = tRNA(n) + a ribonucleoside 5'-diphosphate. Functionally, phosphorolytic 3'-5' exoribonuclease that plays an important role in tRNA 3'-end maturation. Removes nucleotide residues following the 3'-CCA terminus of tRNAs; can also add nucleotides to the ends of RNA molecules by using nucleoside diphosphates as substrates, but this may not be physiologically important. Probably plays a role in initiation of 16S rRNA degradation (leading to ribosome degradation) during starvation. In Carboxydothermus hydrogenoformans (strain ATCC BAA-161 / DSM 6008 / Z-2901), this protein is Ribonuclease PH.